Here is a 261-residue protein sequence, read N- to C-terminus: MKMTKKVLVAGFMGAMGQKAVNLVNNMSGFEVVAGLSPIAEDNPEQYHLPASAKIFKNLTEIPDNLADFWIDFTTPKAVYENVKFALQHHIRPVVGTTGMSDEQEAELIVLSKKEKVGGLIAPNFGMSAVLLMKFAKEAAKYFPDVEIIEMHHADKKDAPSGTALATAKMIAENRPEHQTAPDEVETLKNVRGGDYQGIKIHSVRLPCYIAHEQVLFGGPGEALTIRQDSFDRGSFMNGVKVALEKVDQLDELVIGLENIL.

Residues 11-16 (GFMGAM), 96-98 (GTT), and 122-125 (APNF) each bind NAD(+). The active-site Proton donor/acceptor is histidine 152. Histidine 153 serves as a coordination point for (S)-2,3,4,5-tetrahydrodipicolinate. Catalysis depends on lysine 156, which acts as the Proton donor. Residue 162–163 (GT) participates in (S)-2,3,4,5-tetrahydrodipicolinate binding.

Belongs to the DapB family.

It localises to the cytoplasm. The enzyme catalyses (S)-2,3,4,5-tetrahydrodipicolinate + NAD(+) + H2O = (2S,4S)-4-hydroxy-2,3,4,5-tetrahydrodipicolinate + NADH + H(+). It catalyses the reaction (S)-2,3,4,5-tetrahydrodipicolinate + NADP(+) + H2O = (2S,4S)-4-hydroxy-2,3,4,5-tetrahydrodipicolinate + NADPH + H(+). Its pathway is amino-acid biosynthesis; L-lysine biosynthesis via DAP pathway; (S)-tetrahydrodipicolinate from L-aspartate: step 4/4. Its function is as follows. Catalyzes the conversion of 4-hydroxy-tetrahydrodipicolinate (HTPA) to tetrahydrodipicolinate. This is 4-hydroxy-tetrahydrodipicolinate reductase from Lactobacillus helveticus (strain DPC 4571).